The sequence spans 250 residues: 2,3-bisphosphoglycerate-dependent phosphoglycerate mutase (250 aa).

13 residues coordinate (2R)-2,3-bisphosphoglycerate: R10, H11, N17, G24, R62, E89, Y92, K100, R116, R117, H184, G185, and N186. Catalysis depends on H11, which acts as the Tele-phosphohistidine intermediate. Position 24 (G24) interacts with (2R)-3-phosphoglycerate. Positions 89, 92, 100, 116, and 117 each coordinate (2R)-3-phosphoglycerate. Catalysis depends on E89, which acts as the Proton donor/acceptor. Residue N186 coordinates (2R)-3-phosphoglycerate.

The protein belongs to the phosphoglycerate mutase family. BPG-dependent PGAM subfamily. In terms of tissue distribution, ubiquitously expressed with the highest expression in the sub-tegumental muscle layer (at protein level). Expressed in the tegument (at protein level).

It localises to the tegument. It carries out the reaction (2R)-2-phosphoglycerate = (2R)-3-phosphoglycerate. The protein operates within carbohydrate degradation; glycolysis; pyruvate from D-glyceraldehyde 3-phosphate: step 3/5. Its activity is regulated as follows. Strongly activated by 2,3-bisphosphoglycerate (2,3-BPG). Inhibited by vanadate in a dose-dependent manner. Functionally, catalyzes interconversion of 3- and 2-phosphoglycerate with 2,3-bisphosphoglycerate (2,3-BPG) as the primer of the reaction. Schistosomula have significant surface phosphoglycerate mutase activity also without 2,3-BPG. Binds human plasminogen and enhances its conversion to active thrombolytic plasmin in the presence of human tissue plasminogen activator (tPA) in vitro. Host-interactive surface protein, which may degrade vascular blood clots surrounding the worm in vivo and thus may help survival of the parasite in its host microenvironment. The polypeptide is 2,3-bisphosphoglycerate-dependent phosphoglycerate mutase (Schistosoma mansoni (Blood fluke)).